A 293-amino-acid chain; its full sequence is Putative phosphoenolpyruvate synthase regulatory protein (293 aa).

173–180 is an ADP binding site; that stretch reads GVSRCGKT.

It belongs to the pyruvate, phosphate/water dikinase regulatory protein family. PSRP subfamily.

The enzyme catalyses [pyruvate, water dikinase] + ADP = [pyruvate, water dikinase]-phosphate + AMP + H(+). The catalysed reaction is [pyruvate, water dikinase]-phosphate + phosphate + H(+) = [pyruvate, water dikinase] + diphosphate. Its function is as follows. Bifunctional serine/threonine kinase and phosphorylase involved in the regulation of the phosphoenolpyruvate synthase (PEPS) by catalyzing its phosphorylation/dephosphorylation. The polypeptide is Putative phosphoenolpyruvate synthase regulatory protein (Photorhabdus laumondii subsp. laumondii (strain DSM 15139 / CIP 105565 / TT01) (Photorhabdus luminescens subsp. laumondii)).